We begin with the raw amino-acid sequence, 372 residues long: MQFVHMADNHLGYRQYNLDERENDIYESFLECIDKIIEIRPDFVIHSGDLFESPQPPVNAIRCAMEGLLKLKEKNIPIYLIHGNHDIPKSQQKGKPFGLLKKILGNSLLTFGKNKSHVFNNEVFIGGIEYVSQNKIPKTYEDLEKINSDSKNYKKKILLFHQSVNPFIPQSFEMQVTDFPDDFNYIAGGHIHQRALKPINDGNSVFSYAGSTDIMSVSEVKDYKKNGKGFYLGDLSGDFDINSIQKIDVECRNFLIDKKIKNENDYKKTVEELQNLQSEKKKPILYCDIVENLFNSFNDEIANLTLYKRISRIDENLEESLIINESSIEEIFQEYIKNKEMDVNFVYGLYKKLLENDEDSLLYVNDYFKGNY.

Residues Asp-8, His-10, Asp-49, and Asn-84 each contribute to the Mn(2+) site. Residue His-85 is the Proton donor of the active site. Residues His-161, His-190, and His-192 each coordinate Mn(2+).

It belongs to the MRE11/RAD32 family. Homodimer. Forms a heterotetramer composed of two Mre11 subunits and two Rad50 subunits. Mn(2+) is required as a cofactor.

With respect to regulation, nuclease activity is regulated by Rad50. Its function is as follows. Part of the Rad50/Mre11 complex, which is involved in the early steps of DNA double-strand break (DSB) repair. The complex may facilitate opening of the processed DNA ends to aid in the recruitment of HerA and NurA. Mre11 binds to DSB ends and has both double-stranded 3'-5' exonuclease activity and single-stranded endonuclease activity. This is DNA double-strand break repair protein Mre11 from Methanococcus maripaludis (strain DSM 14266 / JCM 13030 / NBRC 101832 / S2 / LL).